Reading from the N-terminus, the 277-residue chain is Membrane protein insertase YidC 2 (277 aa).

Positions 1 to 22 are cleaved as a signal peptide; sequence MKKYRKILAMLAVLAIVLVLSG. Cys-23 is lipidated: N-palmitoyl cysteine. Cys-23 carries the S-diacylglycerol cysteine lipid modification. The next 5 membrane-spanning stretches (helical) occupy residues 35 to 55, 60 to 80, 130 to 150, 170 to 190, and 208 to 228; these read FWDG…SNLF, GLGI…LMIF, ASML…QAIW, PYYV…WLAM, and PVII…YWVI. A compositionally biased stretch (basic and acidic residues) spans 251 to 266; that stretch reads EAKKQAERDRKRTLEK. Residues 251 to 277 form a disordered region; sequence EAKKQAERDRKRTLEKARKRAIRNHKR. A compositionally biased stretch (basic residues) spans 267-277; sequence ARKRAIRNHKR.

This sequence belongs to the OXA1/ALB3/YidC family. Type 2 subfamily.

The protein resides in the cell membrane. Required for the insertion and/or proper folding and/or complex formation of integral membrane proteins into the membrane. Involved in integration of membrane proteins that insert both dependently and independently of the Sec translocase complex, as well as at least some lipoproteins. The sequence is that of Membrane protein insertase YidC 2 from Lactiplantibacillus plantarum (strain ATCC BAA-793 / NCIMB 8826 / WCFS1) (Lactobacillus plantarum).